The chain runs to 181 residues: UPF0232 protein SAV_4320 (181 aa).

Residues 1–10 (MSDTPAQTPE) show a composition bias toward polar residues. 2 disordered regions span residues 1–64 (MSDT…GRDP) and 156–181 (QGPG…DTYG). Residues 30–39 (AAKEQARARG) are compositionally biased toward basic and acidic residues.

It belongs to the UPF0232 family.

This chain is UPF0232 protein SAV_4320, found in Streptomyces avermitilis (strain ATCC 31267 / DSM 46492 / JCM 5070 / NBRC 14893 / NCIMB 12804 / NRRL 8165 / MA-4680).